The sequence spans 604 residues: UvrABC system protein C (604 aa).

The region spanning 17–95 (AQPGVYRMLN…IKSLAPRYNI (79 aa)) is the GIY-YIG domain. One can recognise a UVR domain in the interval 204–239 (DEVLKTIEQKMFTASDQQDYEQAAQLRDQMQALRKI).

This sequence belongs to the UvrC family. As to quaternary structure, interacts with UvrB in an incision complex.

The protein resides in the cytoplasm. The UvrABC repair system catalyzes the recognition and processing of DNA lesions. UvrC both incises the 5' and 3' sides of the lesion. The N-terminal half is responsible for the 3' incision and the C-terminal half is responsible for the 5' incision. The sequence is that of UvrABC system protein C from Nitrosomonas europaea (strain ATCC 19718 / CIP 103999 / KCTC 2705 / NBRC 14298).